A 395-amino-acid chain; its full sequence is ATP phosphoribosyltransferase regulatory subunit (395 aa).

It belongs to the class-II aminoacyl-tRNA synthetase family. HisZ subfamily. Heteromultimer composed of HisG and HisZ subunits.

The protein localises to the cytoplasm. Its pathway is amino-acid biosynthesis; L-histidine biosynthesis; L-histidine from 5-phospho-alpha-D-ribose 1-diphosphate: step 1/9. Required for the first step of histidine biosynthesis. May allow the feedback regulation of ATP phosphoribosyltransferase activity by histidine. This is ATP phosphoribosyltransferase regulatory subunit from Pseudomonas syringae pv. syringae (strain B728a).